We begin with the raw amino-acid sequence, 461 residues long: Putative aldehyde dehydrogenase FUS7 (461 aa).

NAD(+) is bound at residue 220 to 225 (GSTATG). Catalysis depends on residues Glu242 and Cys276.

It belongs to the aldehyde dehydrogenase family.

It carries out the reaction an aldehyde + NAD(+) + H2O = a carboxylate + NADH + 2 H(+). Putative aldehyde dehydrogenase; part of the gene cluster that mediates the biosynthesis of the mycotoxin fusarin C. Within the cluster, FUS1, FUS2, FUS8 and FUS9 are sufficient for fusarin production. The other FUS cluster members are not essential for fusarin C biosynthesis. The sequence is that of Putative aldehyde dehydrogenase FUS7 from Gibberella moniliformis (strain M3125 / FGSC 7600) (Maize ear and stalk rot fungus).